The primary structure comprises 626 residues: Methanol dehydrogenase [cytochrome c] subunit 1 (626 aa).

Positions 1-27 (MSRFVTSVSALAMLALAPAALSSGAYA) are cleaved as a signal peptide. A disulfide bond links Cys130 and Cys131. Ca(2+)-binding residues include Glu204 and Asn288. Asp330 acts as the Proton acceptor in catalysis. Cys413 and Cys442 are disulfide-bonded.

This sequence belongs to the bacterial PQQ dehydrogenase family. In terms of assembly, heterotetramer composed of 2 alpha and 2 beta subunits. The cofactor is pyrroloquinoline quinone. Requires Ca(2+) as cofactor.

The protein resides in the cell inner membrane. The enzyme catalyses 2 Fe(III)-[cytochrome cL] + a primary alcohol = 2 Fe(II)-[cytochrome cL] + an aldehyde + 2 H(+). In terms of biological role, catalyzes the oxidation of primary alcohols including methanol. The chain is Methanol dehydrogenase [cytochrome c] subunit 1 (moxF) from Methylorubrum extorquens (strain ATCC 14718 / DSM 1338 / JCM 2805 / NCIMB 9133 / AM1) (Methylobacterium extorquens).